A 425-amino-acid polypeptide reads, in one-letter code: Amidase 1 (425 aa).

An N-acetylalanine modification is found at alanine 2. Residues lysine 36 and serine 113 each act as charge relay system in the active site. Serine 137 (acyl-ester intermediate) is an active-site residue.

It belongs to the amidase family. In terms of tissue distribution, expressed in cotyledons, leaves and flower buds. Lower levels in roots, stems and siliques.

It localises to the cytoplasm. It is found in the nucleus. The protein localises to the nucleoplasm. The catalysed reaction is a monocarboxylic acid amide + H2O = a monocarboxylate + NH4(+). It carries out the reaction indole-3-acetamide + H2O = (indol-3-yl)acetate + NH4(+). It catalyses the reaction 2-phenylacetamide + H2O = 2-phenylacetate + NH4(+). The enzyme catalyses L-asparagine + H2O = L-aspartate + NH4(+). The catalysed reaction is 1-naphthaleneacetamide + H2O = 1-naphthaleneacetate + NH4(+). Its activity is regulated as follows. Inhibited by phenylmethylsulfonyl fluoride (PMSF). Amidase involved in auxin biosynthesis. Converts indole-3-acetamide to indole-3-acetate. Converts phenyl-2-acetamide (PAM) to phenyl-2-acetate. Substrate preference is PAM &gt; IAM. Can also use L-asparagine and 1-naphtalene-acetamide as substrates, but not indole-3-acetonitrile or indole-3-acetyl-L-aspartic acid. This chain is Amidase 1, found in Arabidopsis thaliana (Mouse-ear cress).